We begin with the raw amino-acid sequence, 244 residues long: Krueppel-like factor 9 (244 aa).

Disordered regions lie at residues 24–51 and 79–143; these read VPEH…GDPG and PSVC…EKRH. Residues 32–51 show a composition bias toward basic and acidic residues; that stretch reads DAERLRLPEREVTKEHGDPG. Position 122 is a phosphoserine (Ser-122). Residues 134–143 show a composition bias toward basic residues; the sequence is KGKHASEKRH. C2H2-type zinc fingers lie at residues 143–167, 173–197, and 203–225; these read HKCP…YRVH, FPCT…YRTH, and FRCP…ARRH.

This sequence belongs to the Sp1 C2H2-type zinc-finger protein family. In terms of assembly, interacts with ZZEF1.

The protein resides in the nucleus. Transcription factor that binds to GC box promoter elements. Selectively activates mRNA synthesis from genes containing tandem repeats of GC boxes but represses genes with a single GC box. Acts as an epidermal circadian transcription factor regulating keratinocyte proliferation. The protein is Krueppel-like factor 9 (Klf9) of Rattus norvegicus (Rat).